The primary structure comprises 343 residues: Ribosomal RNA small subunit methyltransferase C (343 aa).

This sequence belongs to the methyltransferase superfamily. RsmC family. As to quaternary structure, monomer.

It localises to the cytoplasm. It catalyses the reaction guanosine(1207) in 16S rRNA + S-adenosyl-L-methionine = N(2)-methylguanosine(1207) in 16S rRNA + S-adenosyl-L-homocysteine + H(+). Functionally, specifically methylates the guanine in position 1207 of 16S rRNA in the 30S particle. The chain is Ribosomal RNA small subunit methyltransferase C from Escherichia coli O1:K1 / APEC.